The primary structure comprises 404 residues: Deoxyguanosinetriphosphate triphosphohydrolase-like protein (404 aa).

A disordered region spans residues 1–33 (MSVGMAAPRAAYGCDPDRSRGRQFAEPPSNNRS). Residues 69–217 (RLTHSLEVAQ…AAIADDIAYD (149 aa)) form the HD domain.

It belongs to the dGTPase family. Type 2 subfamily.

In Rhodopseudomonas palustris (strain BisB5), this protein is Deoxyguanosinetriphosphate triphosphohydrolase-like protein.